We begin with the raw amino-acid sequence, 645 residues long: Putative palmitoyltransferase ZDHHC13 (645 aa).

The disordered stretch occupies residues 1 to 73 (MDWSEGDGSH…KSSHPEDSSS (73 aa)). Over 1–314 (MDWSEGDGSH…ACLKLLNRYK (314 aa)) the chain is Cytoplasmic. Over residues 7 to 20 (DGSHSHGHMGDSCH) the composition is skewed to basic and acidic residues. A compositionally biased stretch (basic residues) spans 23 to 33 (GGGHSHGHGHS). A compositionally biased stretch (gly residues) spans 34–43 (HGGSGFGGFM). 5 ANK repeats span residues 104 to 133 (ENVTLLHWAAINNRADIVKYYISKGAVIDQ), 138 to 167 (LNSTPLHWAIRQGHLSMVIQLMRYGADPSL), 171 to 200 (EGYRGLHLAVLFQNMPIAAYLMAKGQEVDL), 204 to 234 (NGQTPLMLAAQKIIGPEPTNFLIKCNASVNA), and 239 to 268 (NRNSPLHCAVLAGNVDSVHILLEAGASVDM). A helical transmembrane segment spans residues 315–335 (VCLQSVFSVVVVGAFGAILDM). A topological domain (lumenal) is located at residue Arg336. A helical membrane pass occupies residues 337-357 (TESWLLKGILLACIMAVINLA). Residues 358–369 (SRQLATVAVRSL) are Cytoplasmic-facing. A helical transmembrane segment spans residues 370 to 390 (IPSTGLIASVFWMVVTWVLWF). Residues 391-394 (LPDE) are Lumenal-facing. Residues 395 to 415 (PSAAVQMLFTVNITAVLYYYI) traverse the membrane as a helical segment. The Cytoplasmic segment spans residues 416-492 (RSCRTDPGHV…NGCIGARNHP (77 aa)). A DHHC domain is found at 449–499 (IFCTSCMMRKPMRANHCFSCNACVAKQDHHSIWINGCIGARNHPFFVLFLV). The helical transmembrane segment at 493–513 (FFVLFLVALNFLCIWMFYGSI) threads the bilayer. Topologically, residues 514–542 (TYWSRHCPLHYSEEGIWGALTALMGCSPW) are lumenal. The helical transmembrane segment at 543–563 (LLYVFCFVFFHTTWASILLVL) threads the bilayer. Residues 564–645 (QLYQIAFLGL…RDMFSSPDAV (82 aa)) lie on the Cytoplasmic side of the membrane.

This sequence belongs to the DHHC palmitoyltransferase family. AKR/ZDHHC17 subfamily.

Its subcellular location is the golgi apparatus membrane. It localises to the cytoplasmic vesicle membrane. Functionally, putative palmitoyltransferase that could catalyze the addition of palmitate onto various protein substrates. The polypeptide is Putative palmitoyltransferase ZDHHC13 (Danio rerio (Zebrafish)).